A 219-amino-acid chain; its full sequence is Melanoma-associated antigen H1 (219 aa).

Positions 1–13 (MPRGRKSRRRRNA) are enriched in basic residues. Residues 1-84 (MPRGRKSRRR…QKPSVPRSNF (84 aa)) are disordered. In terms of domain architecture, MAGE spans 1 to 198 (MPRGRKSRRR…KDWPCNYDWD (198 aa)). Positions 44–57 (PEDDLSGPEEDPST) are enriched in acidic residues. Over residues 58–74 (PEEASTTPEEASSTAQA) the composition is skewed to low complexity. Phosphotyrosine is present on Tyr-195.

The protein is Melanoma-associated antigen H1 (MAGEH1) of Homo sapiens (Human).